The sequence spans 342 residues: GTPase Obg (342 aa).

Residues 1–159 (MKFLDLCKVY…RTIWLRLKLI (159 aa)) enclose the Obg domain. One can recognise an OBG-type G domain in the interval 160–327 (ADAGLLGLPN…VLRALWAEID (168 aa)). GTP contacts are provided by residues 166 to 173 (GLPNAGKS), 191 to 195 (FTTLV), 212 to 215 (DIPG), 279 to 282 (NKID), and 308 to 310 (SGV). Mg(2+)-binding residues include Ser-173 and Thr-193.

This sequence belongs to the TRAFAC class OBG-HflX-like GTPase superfamily. OBG GTPase family. Monomer. Requires Mg(2+) as cofactor.

Its subcellular location is the cytoplasm. In terms of biological role, an essential GTPase which binds GTP, GDP and possibly (p)ppGpp with moderate affinity, with high nucleotide exchange rates and a fairly low GTP hydrolysis rate. Plays a role in control of the cell cycle, stress response, ribosome biogenesis and in those bacteria that undergo differentiation, in morphogenesis control. This Cereibacter sphaeroides (strain KD131 / KCTC 12085) (Rhodobacter sphaeroides) protein is GTPase Obg.